A 115-amino-acid polypeptide reads, in one-letter code: UPF0102 protein NMCC_2054 (115 aa).

This sequence belongs to the UPF0102 family.

The polypeptide is UPF0102 protein NMCC_2054 (Neisseria meningitidis serogroup C (strain 053442)).